A 148-amino-acid chain; its full sequence is Macrodomain Ter protein (148 aa).

Belongs to the MatP family. As to quaternary structure, homodimer.

It localises to the cytoplasm. Required for spatial organization of the terminus region of the chromosome (Ter macrodomain) during the cell cycle. Prevents early segregation of duplicated Ter macrodomains during cell division. Binds specifically to matS, which is a 13 bp signature motif repeated within the Ter macrodomain. This chain is Macrodomain Ter protein, found in Haemophilus influenzae (strain PittGG).